We begin with the raw amino-acid sequence, 327 residues long: Endo-1,4-beta-xylanase C (327 aa).

The first 15 residues, 1 to 15 (MKFSSLLFTASLVAA), serve as a signal peptide directing secretion. The GH10 domain occupies 43–325 (TITDPNLLQS…KPAYTAVVNA (283 aa)). Glu154 functions as the Proton donor in the catalytic mechanism. The active-site Nucleophile is Glu262. A disulfide bridge links Cys280 with Cys286.

Belongs to the glycosyl hydrolase 10 (cellulase F) family.

It localises to the secreted. The enzyme catalyses Endohydrolysis of (1-&gt;4)-beta-D-xylosidic linkages in xylans.. Its pathway is glycan degradation; xylan degradation. With respect to regulation, weakly inhibited by the wheat xylanase inhibiting protein I (XIP-I). Functionally, endo-1,4-beta-xylanase involved in the hydrolysis of xylan, a major structural heterogeneous polysaccharide found in plant biomass representing the second most abundant polysaccharide in the biosphere, after cellulose. Plays an important role in causing fusarium head blight (FHB) on cereal crops. The sequence is that of Endo-1,4-beta-xylanase C (XYLC) from Gibberella zeae (strain ATCC MYA-4620 / CBS 123657 / FGSC 9075 / NRRL 31084 / PH-1) (Wheat head blight fungus).